Here is an 87-residue protein sequence, read N- to C-terminus: Small ribosomal subunit protein bS20 (87 aa).

The segment at 1 to 22 is disordered; sequence MAHHKSALKRIKQNKRKQFRNK.

The protein belongs to the bacterial ribosomal protein bS20 family.

In terms of biological role, binds directly to 16S ribosomal RNA. The chain is Small ribosomal subunit protein bS20 from Geobacter metallireducens (strain ATCC 53774 / DSM 7210 / GS-15).